The sequence spans 487 residues: Glutamyl-tRNA(Gln) amidotransferase subunit A (487 aa).

Catalysis depends on lysine 78, which acts as the Charge relay system. Polar residues predominate over residues 135–144; sequence SAYQTTTNPW. The segment at 135–155 is disordered; the sequence is SAYQTTTNPWDASRVPGGSSG. Residue serine 153 is the Charge relay system of the active site. The active-site Acyl-ester intermediate is serine 177.

The protein belongs to the amidase family. GatA subfamily. Heterotrimer of A, B and C subunits.

The catalysed reaction is L-glutamyl-tRNA(Gln) + L-glutamine + ATP + H2O = L-glutaminyl-tRNA(Gln) + L-glutamate + ADP + phosphate + H(+). Allows the formation of correctly charged Gln-tRNA(Gln) through the transamidation of misacylated Glu-tRNA(Gln) in organisms which lack glutaminyl-tRNA synthetase. The reaction takes place in the presence of glutamine and ATP through an activated gamma-phospho-Glu-tRNA(Gln). The polypeptide is Glutamyl-tRNA(Gln) amidotransferase subunit A (Maridesulfovibrio salexigens (strain ATCC 14822 / DSM 2638 / NCIMB 8403 / VKM B-1763) (Desulfovibrio salexigens)).